The chain runs to 120 residues: Large ribosomal subunit protein uL18 (120 aa).

The protein belongs to the universal ribosomal protein uL18 family. In terms of assembly, part of the 50S ribosomal subunit; part of the 5S rRNA/L5/L18/L25 subcomplex. Contacts the 5S and 23S rRNAs.

In terms of biological role, this is one of the proteins that bind and probably mediate the attachment of the 5S RNA into the large ribosomal subunit, where it forms part of the central protuberance. This Treponema pallidum (strain Nichols) protein is Large ribosomal subunit protein uL18.